The chain runs to 1145 residues: MPRNQGFSDPEYSAEYSAEYSVSLPSDPDRGVGRTHEISVRNSGSCLCLPRFMRLTFVPESLENLYQTYFKRQRHETLLVLVVFAALFDCYVVVMCAVVFSSDKLAPLMVAGFGLVLDIILFVLCKKGLLPDRVSRKVVPYLLWLLISAQIFSYLGLNFSRAHAASDTVGWQAFFVFSFFITLPLSLSPIVIISVVSCVVHTLVLGVTVAQQQQDELEGMQLLREILANVFLYLCAIIVGIMSYYMADRKHRKAFLEARQSLEVKMNLEEQSQQQENLMLSILPKHVADEMLKDMKKDESQKDQQQFNTMYMYRHENVSILFADIVGFTQLSSACSAQELVKLLNELFARFDKLAAKYHQLRIKILGDCYYCICGLPDYREDHAVCSILMGLAMVEAISYVREKTKTGVDMRVGVHTGTVLGGVLGQKRWQYDVWSTDVTVANKMEAGGIPGRVHISQSTMDCLKGEFDVEPGDGGSRCDYLDEKGIETYLIIASKPEVKKTAQNGLNGSAVPNGAPASSKPSSPALIETKEPNGSAHASGSTSEEAEEQEAQADNPSFPNPRRRLRLQDLADRVVDASEDEHELNQLLNEALLERESAQVVKKRNTFLLTMRFMDPEMETRYSVEKEKQSGAAFSCSCVVLFCTAMVEILIDPWLMTNYVTFVVGEVLLLILTICSMAAIFPRSFPKKLVAFSSWIDRTRWARNTWAMLAIFILVMANVVDMLSCLQYYMGPYNMTAGMELDGGCMENPKYYNYVAVLSLIATIMLVQVSHMVKLTLMLLVTGAVTALNLYAWCPVFDEYDHKRFQEKDSPMVALEKMQVLATPGLNGTDSRLPLVPSKYSMTVMMFVMMLSFYYFSRHVEKLARTLFLWKIEVHDQKERVYEMRRWNEALVTNMLPEHVARHFLGSKKRDEELYSQSYDEIGVMFASLPNFADFYTEESINNGGIECLRFLNEIISDFDSLLDNPKFRVITKIKTIGSTYMAASGVTPDVNTNGFTSSSKEEKSDKERWQHLADLADFALAMKDTLTNINNQSFNNFMLRIGMNKGGVLAGVIGARKPHYDIWGNTVNVASRMESTGVMGNIQVVEETQVILREYGFRFVRRGPIFVKGKGELLTFFLKGRDRPAAFPNGSSVTLPHQVVDNP.

The Cytoplasmic segment spans residues Met-1–Leu-79. Helical transmembrane passes span Val-80–Phe-100, Leu-105–Cys-125, Val-139–Phe-159, Ala-173–Ile-193, and Ile-226–Met-246. Residues Asp-324, Ile-325, and Asp-368 each contribute to the Mg(2+) site. ATP is bound by residues Asp-324 to Thr-329 and Leu-366 to Asp-368. A helical transmembrane segment spans residues Glu-381–Val-401. The Cytoplasmic segment spans residues Arg-402–Ser-631. Arg-412 contacts ATP. Residue Lys-465 forms a Glycyl lysine isopeptide (Lys-Gly) (interchain with G-Cter in SUMO3) linkage. The tract at residues Gln-504–Arg-564 is disordered. Low complexity-rich tracts occupy residues Ala-516–Ala-526 and Gly-535–Ser-544. At Ser-524 the chain carries Phosphoserine. Position 579 is a phosphoserine (Ser-579). 3 helical membrane-spanning segments follow: residues Gly-632–Ile-652, Phe-663–Pro-683, and Trp-707–Leu-727. N-linked (GlcNAc...) asparagine glycosylation is present at Asn-735. 3 helical membrane-spanning segments follow: residues Tyr-753 to Met-773, Val-774 to Trp-794, and Leu-834 to Phe-854. Topologically, residues Tyr-855–Pro-1145 are cytoplasmic. Residues Lys-976, Asp-1063–Trp-1065, and Asn-1070–Arg-1074 each bind ATP. A Phosphoserine; by CaMK2 modification is found at Ser-1077. Residue Lys-1110 coordinates ATP.

Belongs to the adenylyl cyclase class-4/guanylyl cyclase family. It depends on Mg(2+) as a cofactor. The cofactor is Mn(2+). N-glycosylated. Post-translationally, rapidly phosphorylated after stimulation by odorants or forskolin. Phosphorylation by CaMK2 at Ser-1077 down-regulates enzyme activity. In terms of processing, sumoylated. Sumoylation is required for targeting of olfactory cilia. In terms of tissue distribution, detected in the acrosomal region of epididymal spermatozoa, the acrosomal region of round spermatids and in elongating spermatids. Detected in cilia in the olfactory epithelium (at protein level). Detected in olfactory epithelium neurons. Detected in brain, testis, late pachytene spermatocytes, round spermatids and elongating spermatids.

The protein localises to the cell membrane. It localises to the cell projection. It is found in the cilium. The protein resides in the golgi apparatus. Its subcellular location is the cytoplasm. The enzyme catalyses ATP = 3',5'-cyclic AMP + diphosphate. With respect to regulation, specifically activated by the G alpha protein GNAL/G(olf) in signaling cascades triggered by odorant receptors. Activated by forskolin. After forskolin treatment, activity is further increased by calcium/calmodulin. In the absence of forskolin, calcium/calmodulin has little effect on enzyme activity. Functionally, catalyzes the formation of the signaling molecule cAMP in response to G-protein signaling. Participates in signaling cascades triggered by odorant receptors via its function in cAMP biosynthesis: specifically activated by G alpha protein GNAL/G(olf) in olfactory epithelium. Required for the perception of odorants. Required for normal sperm motility and normal male fertility. Plays a role in regulating insulin levels and body fat accumulation in response to a high fat diet. The protein is Adenylate cyclase type 3 (Adcy3) of Mus musculus (Mouse).